Consider the following 234-residue polypeptide: UPF0173 metal-dependent hydrolase Msp_0516 (234 aa).

The protein belongs to the UPF0173 family.

This chain is UPF0173 metal-dependent hydrolase Msp_0516, found in Methanosphaera stadtmanae (strain ATCC 43021 / DSM 3091 / JCM 11832 / MCB-3).